The primary structure comprises 231 residues: Large ribosomal subunit protein uL1 (231 aa).

The protein belongs to the universal ribosomal protein uL1 family. In terms of assembly, part of the 50S ribosomal subunit.

Its function is as follows. Binds directly to 23S rRNA. The L1 stalk is quite mobile in the ribosome, and is involved in E site tRNA release. In terms of biological role, protein L1 is also a translational repressor protein, it controls the translation of the L11 operon by binding to its mRNA. In Saccharophagus degradans (strain 2-40 / ATCC 43961 / DSM 17024), this protein is Large ribosomal subunit protein uL1.